The following is a 493-amino-acid chain: MEEMGSILEFLDNKAILVTGATGSLAKIFVEKVLRSQPNVKKLYLLLRATDDETAALRLQNEVFGKELFKVLKQNLGANFYSFVSEKVTVVPGDITGEDLCLKDVNLKEEMWREIDVVVNLAATINFIERYDVSLLINTYGAKYVLDFAKKCNKLKIFVHVSTAYVSGEKNGLILEKPYYMGESLNGRLGLDINVEKKLVEAKINELQAAGATEKSIKSTMKDMGIERARHWGWPNVYVFTKALGEMLLMQYKGDIPLTIIRPTIITSTFKEPFPGWVEGVRTIDNVPVYYGKGRLRCMLCGPSTIIDLIPADMVVNATIVAMVAHANQRYVEPVTYHVGSSAANPMKLSALPEMAHRYFTKNPWINPDRNPVHVGRAMVFSSFSTFHLYLTLNFLLPLKVLEIANTIFCQWFKGKYMDLKRKTRLLLRLVDIYKPYLFFQGIFDDMNTEKLRIAAKESIVEADMFYFDPRAINWEDYFLKTHFPGVVEHVLN.

The protein belongs to the fatty acyl-CoA reductase family.

It carries out the reaction a long-chain fatty acyl-CoA + 2 NADPH + 2 H(+) = a long-chain primary fatty alcohol + 2 NADP(+) + CoA. In terms of biological role, NADPH-dependent alcohol-forming fatty acyl-coenzyme A reductase that catalyzes the reduction of fatty acyl-CoA to fatty alcohols. The recombinant enzyme accepts saturated and mono-unsaturated fatty acyl-CoAs of 16 to 22 carbons. The sequence is that of Alcohol-forming fatty acyl-CoA reductase from Simmondsia chinensis (Jojoba).